The primary structure comprises 195 residues: Granulocyte colony-stimulating factor (195 aa).

The N-terminal stretch at Met-1–Ala-21 is a signal peptide. Disulfide bonds link Cys-57–Cys-63 and Cys-85–Cys-95. Thr-154 carries O-linked (GalNAc...) threonine glycosylation.

Belongs to the IL-6 superfamily. In terms of assembly, monomer. In terms of processing, O-glycosylated.

It is found in the secreted. Granulocyte/macrophage colony-stimulating factors are cytokines that act in hematopoiesis by controlling the production, differentiation, and function of 2 related white cell populations of the blood, the granulocytes and the monocytes-macrophages. This CSF induces granulocytes. The chain is Granulocyte colony-stimulating factor (CSF3) from Sus scrofa (Pig).